The sequence spans 416 residues: Putative competence-damage inducible protein (416 aa).

Belongs to the CinA family.

This chain is Putative competence-damage inducible protein, found in Bacillus pumilus (strain SAFR-032).